Consider the following 489-residue polypeptide: Probable apyrase 1 (489 aa).

Residues 1–28 (MRRFSAAAGARQQQQQGEAVSDRVLRFR) are Cytoplasmic-facing. Residues 29–49 (GVLVVVLAPVLLISLVLLLMP) form a helical; Signal-anchor for type II membrane protein membrane-spanning segment. The Extracellular segment spans residues 50–489 (RAPASATVEG…GSAIEVASSS (440 aa)). 89–99 (VIFDAGSSGSR) is an ATP binding site. Glu211 functions as the Proton acceptor in the catalytic mechanism. Residue 235–245 (GVVDLGGGSVQ) coordinates ATP.

The protein belongs to the GDA1/CD39 NTPase family. Ca(2+) is required as a cofactor.

It is found in the membrane. The enzyme catalyses a ribonucleoside 5'-triphosphate + 2 H2O = a ribonucleoside 5'-phosphate + 2 phosphate + 2 H(+). Functionally, catalyzes the hydrolysis of phosphoanhydride bonds of nucleoside tri- and di-phosphates. The protein is Probable apyrase 1 (APY1) of Oryza sativa subsp. japonica (Rice).